We begin with the raw amino-acid sequence, 746 residues long: Transcription factor pbcR (746 aa).

The segment covering 1 to 12 (MYPWSSTGTSPF) has biased composition (polar residues). The segment at 1 to 40 (MYPWSSTGTSPFSHPDNEGAESGDMSMGEEQQQPHQRRQK) is disordered. A DNA-binding region (zn(2)-C6 fungal-type) is located at residues 47 to 76 (CQSCRASKVRCDQPNPGMPCLRCQKSGKPC). Residues 109-131 (ELQDSAGDGETAHSTALRSPSQL) form a disordered region. The span at 120 to 131 (AHSTALRSPSQL) shows a compositional bias: polar residues.

The protein localises to the nucleus. Its function is as follows. Transcription factor; part of the gene cluster that mediates the biosynthesis of the diterpene ent-pimara-8(14),15-diene (PD). Acts as a positive regulator for the cluster gene. Down-regulates the expression of the penicillin gene cluster, two putative polyketide clusters, and one putative nonribosomal peptide cluster. The polypeptide is Transcription factor pbcR (Emericella nidulans (strain FGSC A4 / ATCC 38163 / CBS 112.46 / NRRL 194 / M139) (Aspergillus nidulans)).